Consider the following 693-residue polypeptide: Sister chromatid cohesion 1 protein 3 (693 aa).

4 disordered regions span residues isoleucine 167–valine 250, aspartate 262–aspartate 361, proline 460–asparagine 511, and threonine 545–asparagine 573. Composition is skewed to basic and acidic residues over residues valine 178 to aspartate 201 and threonine 232 to aspartate 243. The span at serine 264 to aspartate 277 shows a compositional bias: polar residues. Positions valine 278–proline 295 are enriched in basic and acidic residues. The span at arginine 316–glycine 325 shows a compositional bias: low complexity. Polar residues-rich tracts occupy residues proline 465–glutamate 483 and threonine 545–valine 564.

The protein belongs to the rad21 family. Component of the cohesin complex. Low expression in shoots, buds, siliques, leaves and roots. Found in, but not limited to, actively dividing cells: in procambium, protoderm and ground meristem in roots, and in shoot and floral meristems.

Its subcellular location is the nucleus. May be involved in sister chromatid cohesion during mitosis. This is Sister chromatid cohesion 1 protein 3 (SYN3) from Arabidopsis thaliana (Mouse-ear cress).